The following is a 750-amino-acid chain: MAPSFDHLRDEDLDEEDFDMDEVDISDLREKYEVQLEQGYDTFVVVDGLPEVNADQKPKLVKFLLKKLNSVGRVSEDSVYMPMGDNGLSLRFAFVEYSSPAEAAAAVRQLDFTPLDKKHTLRVNKMTDVDRYGREGRIEEEYTAPKIEEFQEKEHLRSFMADPSERGRDQFVMFRGETVGVFWNNEKDQPENIVDRQQWTETFVQWSPQGTYLTSVHAQGVLLWGGASWARLRRFPHPFVNLVAFSPNEKYMVTWSNRPISIPDSGHPALSLDDDGKNYVIWDLETSKPLRSFAQQDTPATGDDAAKKSAKFPWPAFKWSADDKYVARLNQGTSISVYELPKMNLMDKTAIKIEGVMDFEWAPATPRRDGVKTYEQLFCFWTPEIGSNPARVGLMSIPSKQIVRSLNLFSVSDVKLHWQSDSAYICVKVDRHSKSKKSQATTLEIFRVKEKGVPVEVVDTIKDTVINFAWEPKGDRFVIITTPEPVGAVAVAPKTSVAFFCPEKAKGNAIGNFKHLRTLDKKNSNAIYWSPKGRFVVVAAIANTQSSDLDFFDVDFEGEKPEGEKDLTANLQLMNTSEHYGMTDIEWDPSGRYVATWASSWKHVMENGYHLYDFRGELLREEAIEKFKQWSWRPRPATLLTKEEQKQIRKNLREYSRVFEQEDADRISSADVAVVEARRRLLLEWVTWRESMEEELVEDRAALGLPEDPVAELLRQKTAAITPAAGEEQEEQVVEEIMEEVLEESEEIVN.

In terms of domain architecture, RRM spans 42 to 128 (TFVVVDGLPE…HTLRVNKMTD (87 aa)). 4 WD repeats span residues 195-234 (DRQQWTETFVQWSPQGTYLTSVHAQGVLLWGGASWARLRR), 236-292 (PHPF…PLRS), 309-348 (SAKFPWPAFKWSADDKYVARLNQGTSISVYELPKMNLMDK), and 519-562 (LDKK…EKPE).

This sequence belongs to the eIF-3 subunit B family. As to quaternary structure, component of the eukaryotic translation initiation factor 3 (eIF-3) complex.

Its subcellular location is the cytoplasm. In terms of biological role, RNA-binding component of the eukaryotic translation initiation factor 3 (eIF-3) complex, which is involved in protein synthesis of a specialized repertoire of mRNAs and, together with other initiation factors, stimulates binding of mRNA and methionyl-tRNAi to the 40S ribosome. The eIF-3 complex specifically targets and initiates translation of a subset of mRNAs involved in cell proliferation. The protein is Eukaryotic translation initiation factor 3 subunit B of Chaetomium globosum (strain ATCC 6205 / CBS 148.51 / DSM 1962 / NBRC 6347 / NRRL 1970) (Soil fungus).